The primary structure comprises 122 residues: Basic phospholipase A2 CbII (122 aa).

7 disulfides stabilise this stretch: C26–C115, C28–C44, C43–C95, C49–C122, C50–C88, C57–C81, and C75–C86. Ca(2+)-binding residues include Y27, G29, and G31. The active site involves H47. D48 contacts Ca(2+). D89 is a catalytic residue.

Belongs to the phospholipase A2 family. Group I subfamily. D49 sub-subfamily. As to quaternary structure, heterodimer of an acidic subunit (CbIalpha or CbIbeta) and a basic subunit (CbII). The acidic subunit is non-toxic, and increases the toxicity of the basic subunit. Ca(2+) serves as cofactor. As to expression, expressed by the venom gland.

Its subcellular location is the secreted. It carries out the reaction a 1,2-diacyl-sn-glycero-3-phosphocholine + H2O = a 1-acyl-sn-glycero-3-phosphocholine + a fatty acid + H(+). Functionally, heterodimer: presynaptic neurotoxin. Its function is as follows. Monomer: Snake venom phospholipase A2 (PLA2) that exhibits strong anticoagulant effects by binding to factor Xa (F10) and inhibiting the prothrombinase activity (IC(50) is 20 nM). PLA2 catalyzes the calcium-dependent hydrolysis of the 2-acyl groups in 3-sn-phosphoglycerides. The sequence is that of Basic phospholipase A2 CbII from Pseudocerastes fieldi (Field's horned viper).